The chain runs to 375 residues: Actin (375 aa).

The protein belongs to the actin family.

It is found in the cytoplasm. The protein resides in the cytoskeleton. It carries out the reaction ATP + H2O = ADP + phosphate + H(+). In terms of biological role, actins are highly conserved proteins that are involved in various types of cell motility and are ubiquitously expressed in all eukaryotic cells. The polypeptide is Actin (Giardia intestinalis (Giardia lamblia)).